The chain runs to 201 residues: Reticulon-like protein B10 (201 aa).

The Reticulon domain maps to 14–201; the sequence is VADLIMWKNR…KPTNKIKKMQ (188 aa). The next 3 helical transmembrane spans lie at 25–45, 46–66, and 135–155; these read GGFLLLGSTTLLWFLFEKCGY, SFFPFVVNTQLLSVVILFLWA, and FLNFLTILYLGVVLSLLIPFL.

The protein localises to the endoplasmic reticulum membrane. The polypeptide is Reticulon-like protein B10 (RTNLB10) (Arabidopsis thaliana (Mouse-ear cress)).